The primary structure comprises 481 residues: Glutamyl-tRNA(Gln) amidotransferase subunit A (481 aa).

Active-site charge relay system residues include Lys79 and Ser154. Residues 136-157 (SAFGATKNPRNPEHVPGGSSGG) are disordered. Ser178 acts as the Acyl-ester intermediate in catalysis.

The protein belongs to the amidase family. GatA subfamily. In terms of assembly, heterotrimer of A, B and C subunits.

The catalysed reaction is L-glutamyl-tRNA(Gln) + L-glutamine + ATP + H2O = L-glutaminyl-tRNA(Gln) + L-glutamate + ADP + phosphate + H(+). Its function is as follows. Allows the formation of correctly charged Gln-tRNA(Gln) through the transamidation of misacylated Glu-tRNA(Gln) in organisms which lack glutaminyl-tRNA synthetase. The reaction takes place in the presence of glutamine and ATP through an activated gamma-phospho-Glu-tRNA(Gln). The polypeptide is Glutamyl-tRNA(Gln) amidotransferase subunit A (Lachnospira eligens (strain ATCC 27750 / DSM 3376 / VPI C15-48 / C15-B4) (Eubacterium eligens)).